A 501-amino-acid chain; its full sequence is Histidine--tRNA ligase (501 aa).

It belongs to the class-II aminoacyl-tRNA synthetase family. As to quaternary structure, homodimer.

The protein resides in the cytoplasm. It catalyses the reaction tRNA(His) + L-histidine + ATP = L-histidyl-tRNA(His) + AMP + diphosphate + H(+). The polypeptide is Histidine--tRNA ligase (Methylocella silvestris (strain DSM 15510 / CIP 108128 / LMG 27833 / NCIMB 13906 / BL2)).